The primary structure comprises 415 residues: Squalene synthase 3 (415 aa).

Transmembrane regions (helical) follow at residues 281-301 (AIFR…ALCY) and 392-412 (LIII…SNLP).

Belongs to the phytoene/squalene synthase family. The cofactor is Mg(2+). It depends on Mn(2+) as a cofactor.

The protein resides in the endoplasmic reticulum membrane. The enzyme catalyses 2 (2E,6E)-farnesyl diphosphate + NADH + H(+) = squalene + 2 diphosphate + NAD(+). The catalysed reaction is 2 (2E,6E)-farnesyl diphosphate + NADPH + H(+) = squalene + 2 diphosphate + NADP(+). It functions in the pathway terpene metabolism; lanosterol biosynthesis; lanosterol from farnesyl diphosphate: step 1/3. Functionally, component of the triterpene saponins (e.g. ginsenosides or panaxosides) and phytosterols biosynthetic pathways. Catalyzes the biosynthesis of squalene. This chain is Squalene synthase 3, found in Panax ginseng (Korean ginseng).